We begin with the raw amino-acid sequence, 307 residues long: NAD kinase 2 (307 aa).

The active-site Proton acceptor is Asp77. Residues 77–78, 151–152, Asp181, 192–197, and Asn251 contribute to the NAD(+) site; these read DG, NE, and TAYALS.

It belongs to the NAD kinase family. The cofactor is a divalent metal cation.

The protein localises to the cytoplasm. The enzyme catalyses NAD(+) + ATP = ADP + NADP(+) + H(+). Its function is as follows. Involved in the regulation of the intracellular balance of NAD and NADP, and is a key enzyme in the biosynthesis of NADP. Catalyzes specifically the phosphorylation on 2'-hydroxyl of the adenosine moiety of NAD to yield NADP. This Thermosynechococcus vestitus (strain NIES-2133 / IAM M-273 / BP-1) protein is NAD kinase 2.